A 25-amino-acid chain; its full sequence is Caerin-1.3 (25 aa).

L25 bears the Leucine amide mark.

In terms of tissue distribution, expressed by the skin parotoid and/or rostral glands.

Its subcellular location is the secreted. Its function is as follows. Antibacterial peptide, that adopts an alpha helical conformation which can disrupt bacterial membranes. Each caerin displays a different antimicrobial specificity. This is Caerin-1.3 from Ranoidea caerulea (Green tree frog).